The chain runs to 308 residues: Aspartate carbamoyltransferase catalytic subunit (308 aa).

Arg-51 and Thr-52 together coordinate carbamoyl phosphate. Lys-79 lines the L-aspartate pocket. Residues Arg-101, His-130, and Gln-133 each coordinate carbamoyl phosphate. Residues Arg-163 and Arg-215 each contribute to the L-aspartate site. Positions 258 and 259 each coordinate carbamoyl phosphate.

It belongs to the aspartate/ornithine carbamoyltransferase superfamily. ATCase family. In terms of assembly, heterododecamer (2C3:3R2) of six catalytic PyrB chains organized as two trimers (C3), and six regulatory PyrI chains organized as three dimers (R2).

It catalyses the reaction carbamoyl phosphate + L-aspartate = N-carbamoyl-L-aspartate + phosphate + H(+). It functions in the pathway pyrimidine metabolism; UMP biosynthesis via de novo pathway; (S)-dihydroorotate from bicarbonate: step 2/3. In terms of biological role, catalyzes the condensation of carbamoyl phosphate and aspartate to form carbamoyl aspartate and inorganic phosphate, the committed step in the de novo pyrimidine nucleotide biosynthesis pathway. This is Aspartate carbamoyltransferase catalytic subunit from Pediococcus pentosaceus (strain ATCC 25745 / CCUG 21536 / LMG 10740 / 183-1w).